A 239-amino-acid chain; its full sequence is Ribonuclease 3 (239 aa).

The 124-residue stretch at 18-141 folds into the RNase III domain; sequence YTTLEKALGY…LMAGVYLEAG (124 aa). Glutamate 54 contributes to the Mg(2+) binding site. The active site involves aspartate 58. Positions 127 and 130 each coordinate Mg(2+). Glutamate 130 is an active-site residue. In terms of domain architecture, DRBM spans 168-237; sequence DYKTALQELT…AYQALQKLKE (70 aa).

It belongs to the ribonuclease III family. Homodimer. Mg(2+) serves as cofactor.

The protein localises to the cytoplasm. It carries out the reaction Endonucleolytic cleavage to 5'-phosphomonoester.. In terms of biological role, digests double-stranded RNA. Involved in the processing of primary rRNA transcript to yield the immediate precursors to the large and small rRNAs (23S and 16S). Processes some mRNAs, and tRNAs when they are encoded in the rRNA operon. Processes pre-crRNA and tracrRNA of type II CRISPR loci if present in the organism. This chain is Ribonuclease 3, found in Helicobacter pylori (strain ATCC 700392 / 26695) (Campylobacter pylori).